Here is a 90-residue protein sequence, read N- to C-terminus: UPF0237 protein NMB1653 (90 aa).

Positions 5 to 83 (VITVIGKDRV…LDIRMQNEEI (79 aa)) constitute an ACT domain.

This sequence belongs to the UPF0237 family.

The polypeptide is UPF0237 protein NMB1653 (Neisseria meningitidis serogroup B (strain ATCC BAA-335 / MC58)).